The chain runs to 2957 residues: Toxin PAU_02230 (2957 aa).

Residues 949–968 are disordered; it reads TSVSPAETAQSTPEPLSDFA. Positions 2115–2144 are membrane localization domain that interacts with the inner leaflet of the plasma membrane; the sequence is EWFKHSETGLKGGGPIDDIRKYIARKSAIK. The tyrosine glycosyltransferase PaToxG stretch occupies residues 2115–2449; that stretch reads EWFKHSETGL…TSTIVTPLAP (335 aa). UDP-N-acetyl-alpha-D-glucosamine is bound by residues 2169-2171 and 2259-2260; these read IWI and SD. Residues Asp2276 and Asp2278 each contribute to the a divalent metal cation site. The short motif at 2276–2279 is the DxDD motif element; that stretch reads DIDD. Asn2312 lines the UDP-N-acetyl-alpha-D-glucosamine pocket. A sseI-like deamidase PaToxD region spans residues 2450–2672; sequence KTEMLPPVPS…NYSVNPTAEN (223 aa). Catalysis depends on for deamidase activity residues Cys2509, His2547, and Asp2562. Residues 2667 to 2705 form a disordered region; that stretch reads NPTAENLSPPPPPPIPSHGQVPKTVTPPPPPMRSPLSLS.

It depends on a divalent metal cation as a cofactor.

It localises to the secreted. The protein localises to the host cell membrane. It carries out the reaction L-tyrosyl-[protein] + UDP-N-acetyl-alpha-D-glucosamine = O-(N-acetyl-alpha-D-glucosaminyl)-L-tyrosyl-[protein] + UDP + H(+). It catalyses the reaction L-glutaminyl-[protein] + H2O = L-glutamyl-[protein] + NH4(+). Its function is as follows. Toxin that acts on host cells by modifying Rho proteins by tyrosine GlcNAcylation and heterotrimeric G alpha proteins by deamidation. Catalyzes the mono-O-GlcNAcylation of small GTPases of the Rho family (RhoA, RhoB, RhoC, Rac1, Rac2, Rac3, Cdc42) in eukaryotic host cells at the conserved tyrosine residue located in the switch I region (Tyr-32/34), using UDP-N-acetylglucosamine (UDP-GlcNAc) as the sugar donor; other GTPases of the Rho, Ras or Rab families are not substrates. Tyrosine glycosylation inhibits Rho activation and prevents interaction with downstream effectors, resulting in actin disassembly, inhibition of phagocytosis, cell rounding, and toxicity toward insects and mammalian cells. Also catalyzes the deamidation of the catalytic glutamine in heterotrimeric G alpha proteins (Gi, Gq/11), which blocks GTP hydrolysis and arrests the G proteins in a permanent active state leading to activation of Rho GTPases. Thus, PaTox hijacks host GTPase signaling in a bidirectional manner by deamidation-induced activation and glycosylation-induced inactivation of GTPases. The sequence is that of Toxin PAU_02230 from Photorhabdus asymbiotica subsp. asymbiotica (strain ATCC 43949 / 3105-77) (Xenorhabdus luminescens (strain 2)).